The sequence spans 823 residues: Leucine--tRNA ligase (823 aa).

The 'HIGH' region signature appears at 42–52 (PYPSGTLHMGH). A 'KMSKS' region motif is present at residues 575–579 (KMSKS). K578 serves as a coordination point for ATP.

It belongs to the class-I aminoacyl-tRNA synthetase family.

Its subcellular location is the cytoplasm. It carries out the reaction tRNA(Leu) + L-leucine + ATP = L-leucyl-tRNA(Leu) + AMP + diphosphate. The chain is Leucine--tRNA ligase from Legionella pneumophila subsp. pneumophila (strain Philadelphia 1 / ATCC 33152 / DSM 7513).